A 228-amino-acid polypeptide reads, in one-letter code: Protein CWC15 homolog A (228 aa).

A disordered region spans residues 1–126 (MTTAARPTFE…DEDSDDDTAA (126 aa)). Residues 24–34 (SQLSKQYSSRD) are compositionally biased toward polar residues. Positions 52–84 (EEVRSRDFRRELEERERVVARDKNRDRPTREHT) are enriched in basic and acidic residues. The segment covering 102–124 (DADDPLTDEDGDEDSDEDSDDDT) has biased composition (acidic residues). Residues 121-165 (DDDTAALLAELEKIKKERAEEKDRKELEQKAEEERIRMENILSGN) are a coiled coil.

This sequence belongs to the CWC15 family. In terms of assembly, identified in the spliceosome C complex. Component of the minor spliceosome, which splices U12-type introns.

It localises to the nucleus. Its function is as follows. Involved in pre-mRNA splicing as component of the spliceosome. The protein is Protein CWC15 homolog A (cwc15-a) of Xenopus laevis (African clawed frog).